The primary structure comprises 91 residues: MKKLFASLALAAFVAPVFAATQTVTLSVPGMTCASCPITVKHALSKVEGVSKTDVSFDKRQAVVTFDDAKTNVQKLTKATEDAGYPSSLKR.

The first 19 residues, 1–19, serve as a signal peptide directing secretion; the sequence is MKKLFASLALAAFVAPVFA. The HMA domain maps to 22–88; that stretch reads QTVTLSVPGM…ATEDAGYPSS (67 aa). Residues Cys33 and Cys36 each contribute to the Hg(2+) site.

Belongs to the MerP family. As to quaternary structure, monomer.

It is found in the periplasm. Functionally, involved in mercury resistance. Acts as a mercury scavenger that specifically binds to a mercuric ion in the periplasm and probably passes it to the cytoplasmic mercuric reductase MerA via the mercuric transport protein MerT. This Acinetobacter calcoaceticus protein is Mercuric transport protein periplasmic component.